The chain runs to 279 residues: Ribosomal RNA small subunit methyltransferase J (279 aa).

Residues 138-139 and Asp194 each bind S-adenosyl-L-methionine; that span reads ER.

Belongs to the methyltransferase superfamily. RsmJ family.

It localises to the cytoplasm. It carries out the reaction guanosine(1516) in 16S rRNA + S-adenosyl-L-methionine = N(2)-methylguanosine(1516) in 16S rRNA + S-adenosyl-L-homocysteine + H(+). Functionally, specifically methylates the guanosine in position 1516 of 16S rRNA. In Acinetobacter baumannii (strain SDF), this protein is Ribosomal RNA small subunit methyltransferase J.